A 239-amino-acid polypeptide reads, in one-letter code: Probable transcriptional regulatory protein ABO_1803 (239 aa).

Belongs to the TACO1 family.

The protein localises to the cytoplasm. This chain is Probable transcriptional regulatory protein ABO_1803, found in Alcanivorax borkumensis (strain ATCC 700651 / DSM 11573 / NCIMB 13689 / SK2).